A 415-amino-acid polypeptide reads, in one-letter code: Queuine tRNA-ribosyltransferase accessory subunit 2 (415 aa).

The Zn(2+) site is built by Cys351, Cys353, Cys356, and His382.

Belongs to the queuine tRNA-ribosyltransferase family. QTRT2 subfamily. In terms of assembly, heterodimer of a catalytic subunit QTRT1 and an accessory subunit QTRT2. Requires Zn(2+) as cofactor.

The protein resides in the cytoplasm. Its subcellular location is the mitochondrion outer membrane. Functionally, non-catalytic subunit of the queuine tRNA-ribosyltransferase (TGT) that catalyzes the base-exchange of a guanine (G) residue with queuine (Q) at position 34 (anticodon wobble position) in tRNAs with GU(N) anticodons (tRNA-Asp, -Asn, -His and -Tyr), resulting in the hypermodified nucleoside queuosine (7-(((4,5-cis-dihydroxy-2-cyclopenten-1-yl)amino)methyl)-7-deazaguanosine). The sequence is that of Queuine tRNA-ribosyltransferase accessory subunit 2 from Homo sapiens (Human).